Here is a 728-residue protein sequence, read N- to C-terminus: 1,4-alpha-glucan branching enzyme GlgB (728 aa).

The active-site Nucleophile is the aspartate 405. The Proton donor role is filled by glutamate 458.

The protein belongs to the glycosyl hydrolase 13 family. GlgB subfamily. In terms of assembly, monomer.

It catalyses the reaction Transfers a segment of a (1-&gt;4)-alpha-D-glucan chain to a primary hydroxy group in a similar glucan chain.. It participates in glycan biosynthesis; glycogen biosynthesis. Catalyzes the formation of the alpha-1,6-glucosidic linkages in glycogen by scission of a 1,4-alpha-linked oligosaccharide from growing alpha-1,4-glucan chains and the subsequent attachment of the oligosaccharide to the alpha-1,6 position. In Escherichia coli O1:K1 / APEC, this protein is 1,4-alpha-glucan branching enzyme GlgB.